A 168-amino-acid polypeptide reads, in one-letter code: UPF0262 protein BBta_0898 (168 aa).

Belongs to the UPF0262 family.

The chain is UPF0262 protein BBta_0898 from Bradyrhizobium sp. (strain BTAi1 / ATCC BAA-1182).